Consider the following 156-residue polypeptide: Ribonuclease pancreatic (156 aa).

An N-terminal signal peptide occupies residues 1-28; sequence MALEKSLALLPLLVLVLLVLGWVQPSLG. Basic and acidic residues predominate over residues 33–43; that stretch reads AKKFQRQHMDS. A disordered region spans residues 33-52; that stretch reads AKKFQRQHMDSDGSPSSNPT. Residues Lys35 and Arg38 each coordinate substrate. The active-site Proton acceptor is His40. 4 cysteine pairs are disulfide-bonded: Cys54-Cys112, Cys68-Cys123, Cys86-Cys138, and Cys93-Cys100. An N-linked (GlcNAc...) asparagine glycan is attached at Asn62. Residue 69-73 participates in substrate binding; it reads KPVNT. An N-linked (GlcNAc...) asparagine glycan is attached at Asn90. Substrate-binding residues include Lys94 and Arg113. A glycan (N-linked (GlcNAc...) asparagine) is linked at Asn116. His147 functions as the Proton donor in the catalytic mechanism.

This sequence belongs to the pancreatic ribonuclease family. Monomer. Interacts with and forms tight 1:1 complexes with RNH1. Dimerization of two such complexes may occur. Interaction with RNH1 inhibits this protein.

The protein resides in the secreted. The catalysed reaction is an [RNA] containing cytidine + H2O = an [RNA]-3'-cytidine-3'-phosphate + a 5'-hydroxy-ribonucleotide-3'-[RNA].. It catalyses the reaction an [RNA] containing uridine + H2O = an [RNA]-3'-uridine-3'-phosphate + a 5'-hydroxy-ribonucleotide-3'-[RNA].. In terms of biological role, endonuclease that catalyzes the cleavage of RNA on the 3' side of pyrimidine nucleotides. Acts on single-stranded and double-stranded RNA. The protein is Ribonuclease pancreatic (RNASE1) of Ateles geoffroyi (Black-handed spider monkey).